Consider the following 108-residue polypeptide: MSDILDRLAEILEARKQASPDASYVARLYAKGTDAILKKIGEEATETVMAAKDDQAEKIIYEVADLWFHTLVLLAHKGLKPADVLEELARREGLSGLTEKANRQGGST.

Belongs to the PRA-PH family.

It localises to the cytoplasm. The enzyme catalyses 1-(5-phospho-beta-D-ribosyl)-ATP + H2O = 1-(5-phospho-beta-D-ribosyl)-5'-AMP + diphosphate + H(+). It participates in amino-acid biosynthesis; L-histidine biosynthesis; L-histidine from 5-phospho-alpha-D-ribose 1-diphosphate: step 2/9. This Thiobacillus denitrificans (strain ATCC 25259 / T1) protein is Phosphoribosyl-ATP pyrophosphatase.